Consider the following 344-residue polypeptide: Ferredoxin--NADP reductase (344 aa).

Serine 12, aspartate 31, lysine 39, tyrosine 43, valine 83, isoleucine 118, aspartate 285, and serine 326 together coordinate FAD.

Belongs to the ferredoxin--NADP reductase type 2 family. Homodimer. FAD serves as cofactor.

The catalysed reaction is 2 reduced [2Fe-2S]-[ferredoxin] + NADP(+) + H(+) = 2 oxidized [2Fe-2S]-[ferredoxin] + NADPH. This chain is Ferredoxin--NADP reductase, found in Staphylococcus aureus (strain MW2).